The following is a 285-amino-acid chain: MKVTVGPDPSLVYRPDVDPEMAKDKASFRNYTSGPLLDRVFTTYKLMHTHQTVDFVRSKHAQFGGFSYKKMTVMEAVDLLDGLVDESDPDVDFPNSFHAFQTAEGIRKAHPDKDWFHLVGLLHDLGKVLALFGEPQWAVVGDTFPVGCRPQASVVFCDSTFQDNPDLQDPRYSTELGMYQPHCGLDRVLMSWGHDEYMYQVMKFNKFSLPPEAFYMIRFHSFYPWHTGSDYQQLCSQQDLAMLPWVQEFNKFDLYTKCPDLPDVDKLRPYYQGLIDKYCPGILSW.

Arg29 serves as a coordination point for substrate. Ser33 is subject to Phosphoserine. 85–87 (DES) is a binding site for substrate. Residues His98, His123, and Asp124 each coordinate Fe cation. Residues Lys127 and 141–142 (GD) contribute to the substrate site. Positions 194, 220, and 253 each coordinate Fe cation. 220-221 (HS) contributes to the substrate binding site.

It belongs to the myo-inositol oxygenase family. It depends on Fe cation as a cofactor.

The protein localises to the cytoplasm. It catalyses the reaction myo-inositol + O2 = D-glucuronate + H2O + H(+). The protein operates within polyol metabolism; myo-inositol degradation into D-glucuronate; D-glucuronate from myo-inositol: step 1/1. The protein is Inositol oxygenase (MIOX) of Pongo abelii (Sumatran orangutan).